The primary structure comprises 320 residues: tRNA U34 carboxymethyltransferase (320 aa).

Carboxy-S-adenosyl-L-methionine is bound by residues K89, W103, K108, G128, 150 to 152 (DPT), 179 to 180 (LE), M194, Y198, and R313.

Belongs to the class I-like SAM-binding methyltransferase superfamily. CmoB family. In terms of assembly, homotetramer.

The enzyme catalyses carboxy-S-adenosyl-L-methionine + 5-hydroxyuridine(34) in tRNA = 5-carboxymethoxyuridine(34) in tRNA + S-adenosyl-L-homocysteine + H(+). Its function is as follows. Catalyzes carboxymethyl transfer from carboxy-S-adenosyl-L-methionine (Cx-SAM) to 5-hydroxyuridine (ho5U) to form 5-carboxymethoxyuridine (cmo5U) at position 34 in tRNAs. The sequence is that of tRNA U34 carboxymethyltransferase from Haemophilus ducreyi (strain 35000HP / ATCC 700724).